We begin with the raw amino-acid sequence, 110 residues long: uncharacterized protein (110 aa).

It belongs to the RuBisCO large chain family.

It localises to the mitochondrion. This is an uncharacterized protein from Arabidopsis thaliana (Mouse-ear cress).